A 449-amino-acid polypeptide reads, in one-letter code: Deoxyguanosinetriphosphate triphosphohydrolase-like protein (449 aa).

A disordered region spans residues methionine 1–arginine 27. Residues glutamine 7 to arginine 27 show a composition bias toward basic and acidic residues. An HD domain is found at arginine 59–alanine 255.

It belongs to the dGTPase family. Type 2 subfamily.

The sequence is that of Deoxyguanosinetriphosphate triphosphohydrolase-like protein from Shewanella baltica (strain OS185).